The sequence spans 258 residues: Chemokine-binding protein (258 aa).

Residues 1 to 17 form the signal peptide; that stretch reads MKQYIVLACMCLAAAAM. The tract at residues 65-93 is disordered; the sequence is TEITESESDPDPEVESEDDSTSVEDVDPP. The segment covering 68–91 has biased composition (acidic residues); that stretch reads TESESDPDPEVESEDDSTSVEDVD.

Belongs to the orthopoxvirus OPG001 family. In terms of assembly, binds to host CC chemokines, such as RANTES/CCL5, MIP-1alpha/CCL3, MCP-1/CCL2 and eotaxin.

The protein resides in the secreted. Functionally, inhibits host immune defense by binding to host chemokines. Binds host CC chemokines (beta chemokines) such as RANTES with high affinity, but not CXC or C chemokines (alpha and gamma chemokines). This chain is Chemokine-binding protein (OPG001), found in Homo sapiens (Human).